Here is a 391-residue protein sequence, read N- to C-terminus: Homoserine O-acetyltransferase (391 aa).

Positions 50–360 (NAILICHALT…DKGHDAFLLD (311 aa)) constitute an AB hydrolase-1 domain. Ser-155 (nucleophile) is an active-site residue. Arg-225 serves as a coordination point for substrate. Residues Asp-321 and His-354 contribute to the active site. A substrate-binding site is contributed by Asp-355.

The protein belongs to the AB hydrolase superfamily. MetX family. In terms of assembly, homodimer.

The protein resides in the cytoplasm. It catalyses the reaction L-homoserine + acetyl-CoA = O-acetyl-L-homoserine + CoA. It participates in amino-acid biosynthesis; L-methionine biosynthesis via de novo pathway; O-acetyl-L-homoserine from L-homoserine: step 1/1. Its function is as follows. Transfers an acetyl group from acetyl-CoA to L-homoserine, forming acetyl-L-homoserine. In Rhodospirillum rubrum (strain ATCC 11170 / ATH 1.1.1 / DSM 467 / LMG 4362 / NCIMB 8255 / S1), this protein is Homoserine O-acetyltransferase.